We begin with the raw amino-acid sequence, 206 residues long: Glycerol-3-phosphate acyltransferase (206 aa).

The next 5 helical transmembrane spans lie at 3–23, 51–71, 83–103, 113–133, and 162–182; these read LGWL…SYII, VGPA…AVVV, FAAA…YYGF, IGVL…IAIG, and WFGY…LSMW.

The protein belongs to the PlsY family. In terms of assembly, probably interacts with PlsX.

Its subcellular location is the cell membrane. It carries out the reaction an acyl phosphate + sn-glycerol 3-phosphate = a 1-acyl-sn-glycero-3-phosphate + phosphate. The protein operates within lipid metabolism; phospholipid metabolism. Catalyzes the transfer of an acyl group from acyl-phosphate (acyl-PO(4)) to glycerol-3-phosphate (G3P) to form lysophosphatidic acid (LPA). This enzyme utilizes acyl-phosphate as fatty acyl donor, but not acyl-CoA or acyl-ACP. The chain is Glycerol-3-phosphate acyltransferase from Halalkalibacterium halodurans (strain ATCC BAA-125 / DSM 18197 / FERM 7344 / JCM 9153 / C-125) (Bacillus halodurans).